A 643-amino-acid polypeptide reads, in one-letter code: Probable extracellular metalloproteinase 4 (643 aa).

Residues Met-1–Ala-18 form the signal peptide. A propeptide spanning residues His-19–Ala-254 is cleaved from the precursor. The interval Ser-49 to Asn-69 is disordered. Positions Glu-58–Asn-69 are enriched in polar residues. 2 N-linked (GlcNAc...) asparagine glycosylation sites follow: Asn-271 and Asn-420. His-437 provides a ligand contact to Zn(2+). The active site involves Glu-438. His-441 serves as a coordination point for Zn(2+). Residues Asn-603 and Asn-629 are each glycosylated (N-linked (GlcNAc...) asparagine).

This sequence belongs to the peptidase M36 family. Zn(2+) is required as a cofactor.

The protein localises to the secreted. Secreted metalloproteinase probably acting as a virulence factor. In Trichophyton verrucosum (strain HKI 0517), this protein is Probable extracellular metalloproteinase 4 (MEP4).